Consider the following 901-residue polypeptide: Alpha-actinin-3 (901 aa).

Met-1 is modified (N-acetylmethionine). Positions 1–261 (MMMVLQPEGL…IMTYVSCFYH (261 aa)) are actin-binding. Calponin-homology (CH) domains are found at residues 45–149 (KQQR…LRFA) and 158–264 (TSAK…HAFA). Spectrin repeat units lie at residues 288-398 (KLME…WLLS), 408-513 (HLAE…ALER), 523-634 (QLQL…MLQE), and 644-747 (RLRR…EVEN). EF-hand domains lie at 760 to 795 (EQLNEFRASFNHFDRKRNGMMEPDDFRACLISMGYD) and 796 to 831 (LGEVEFARIMTMVDPNAAGVVTFQAFIDFMTRETAE). 6 residues coordinate Ca(2+): Asp-773, Asn-777, Met-779, Asp-784, Asp-809, and Asn-811.

Belongs to the alpha-actinin family. Homodimer; antiparallel. Also forms heterodimers with ACTN2. Interacts with MYOZ1.

Functionally, F-actin cross-linking protein which is thought to anchor actin to a variety of intracellular structures. This is a bundling protein. This chain is Alpha-actinin-3 (ACTN3), found in Bos taurus (Bovine).